A 252-amino-acid chain; its full sequence is Major prion protein (252 aa).

A signal peptide spans 1–28 (MAHLGYWMLLLFVATWSDVGLCKKRPKP). Positions 23–229 (KKRPKPGGGW…ESQAAYQRAA (207 aa)) are interaction with GRB2, ERI3 and SYN1. Residues 26–109 (PKPGGGWNTG…KPSKPKTSMK (84 aa)) form a disordered region. 5 tandem repeats follow at residues 51–59 (PPQGGGWGQ), 60–67 (PHGGGWGQ), 68–75 (PHGGGWGQ), 76–83 (PHGGGWGQ), and 84–92 (PHGGGWGQG). Residues 51 to 92 (PPQGGGWGQPHGGGWGQPHGGGWGQPHGGGWGQPHGGGWGQG) form a 5 X 8 AA tandem repeats of P-H-G-G-G-W-G-Q region. Gly residues predominate over residues 53-93 (QGGGWGQPHGGGWGQPHGGGWGQPHGGGWGQPHGGGWGQGG). Cu(2+)-binding residues include H61, G62, G63, H69, G70, G71, H77, G78, G79, H85, G86, and G87. Residues C178 and C213 are joined by a disulfide bond. N-linked (GlcNAc...) asparagine glycans are attached at residues N180 and N196. A229 carries GPI-anchor amidated alanine lipidation. A propeptide spans 230–252 (GVLLFSSPPVILLISFLIFLIVG) (removed in mature form).

It belongs to the prion family. Monomer and homodimer. Has a tendency to aggregate into amyloid fibrils containing a cross-beta spine, formed by a steric zipper of superposed beta-strands. Soluble oligomers may represent an intermediate stage on the path to fibril formation. Copper binding may promote oligomerization. Interacts with GRB2, APP, ERI3/PRNPIP and SYN1. Mislocalized cytosolically exposed PrP interacts with MGRN1; this interaction alters MGRN1 subcellular location and causes lysosomal enlargement. Interacts with KIAA1191.

The protein localises to the cell membrane. Its subcellular location is the golgi apparatus. In terms of biological role, its primary physiological function is unclear. Has cytoprotective activity against internal or environmental stresses. May play a role in neuronal development and synaptic plasticity. May be required for neuronal myelin sheath maintenance. May play a role in iron uptake and iron homeostasis. Soluble oligomers are toxic to cultured neuroblastoma cells and induce apoptosis (in vitro). Association with GPC1 (via its heparan sulfate chains) targets PRNP to lipid rafts. Also provides Cu(2+) or Zn(2+) for the ascorbate-mediated GPC1 deaminase degradation of its heparan sulfate side chains. This is Major prion protein (PRNP) from Oryctolagus cuniculus (Rabbit).